Here is a 437-residue protein sequence, read N- to C-terminus: MNSFKKFLNKKRVQNHFKKSGEGVRLSSGESSSQPSAHAGAAQGGQIDRVAAADIAAQAAFKRMQKNEPQQNAGKRRIQMIAKRELEEERRQVEDLNISGTSSLQQPDREQHLEHSSAISRVLYTSELLGEHHIRSKADLLEDIKNFLSDQISEADDENDKVIAAVLMLYSLNKKHPKETAIETICKYCQNILEHPGEDKYKSIRLGNKAFQERVASVVGGRAFLEAVGFTEKSEGEDKFLVFTKPSDVHLVEALEALKDGQAVPIKVARNLEIFKLKEGQKPKAPKLADDFYNLSTAELKAEQRNKEMQVERMLTLRTKEMRQKDEQMTNYRYKYTLIRVRLPGNLLMQGVFGCHEPFSAVRVFVASTLSDALSTSEFTLRDAASQLVEDESASLAQLSLAPAALLHVVFAENLSDYGQIVADEHIEIIQELEASD.

Disordered regions lie at residues 1–45 (MNSF…AQGG) and 89–109 (ERRQ…QPDR). Residues 7–18 (FLNKKRVQNHFK) are compositionally biased toward basic residues. A PUB domain is found at 179-251 (ETAIETICKY…VFTKPSDVHL (73 aa)). In terms of domain architecture, UBX spans 332-409 (YRYKYTLIRV…SLAPAALLHV (78 aa)).

As to quaternary structure, interacts with cdc-48.1 (via N-terminus) and cdc-48.2 (via N-terminus). In terms of tissue distribution, expressed in the pharynx and some head neurons.

Its function is as follows. Probably acts as an adapter for ATPase cdc-48.1 and/or cdc-48.2, conferring substrate specificity. Involved in the lysosomal clearance of cellular material in diet restricted conditions. In Caenorhabditis elegans, this protein is UBX domain-containing protein 6.